We begin with the raw amino-acid sequence, 1047 residues long: Ubiquitin carboxyl-terminal hydrolase 48 (1047 aa).

A USP domain is found at 89–416 (VGLTNLGATC…NAYMLVYKQQ (328 aa)). Cysteine 98 acts as the Nucleophile in catalysis. The active-site Proton acceptor is histidine 348. DUSP domains lie at 457-551 (QSVD…RSSL), 567-697 (NQLN…DHDP), and 717-830 (MMAN…RIHD). The disordered stretch occupies residues 609–647 (LEEDEEETKHNNSKINGEKSSPGTKADGVKGDSEDGDGE). Positions 621 to 631 (SKINGEKSSPG) are enriched in polar residues. The segment covering 635-647 (DGVKGDSEDGDGE) has biased composition (basic and acidic residues). A disordered region spans residues 887-928 (PEFSVSGSDVEDEKEEPKLDGEKDPDFSQTEGGAKRQKLNDT). Basic and acidic residues predominate over residues 901-912 (EEPKLDGEKDPD). Residues 961–1012 (VSANQTLKDLKIQIMHAFSVAPFDQNLSIDGRCLKDDSATLGSLGVIPESII) enclose the Ubiquitin-like domain.

It belongs to the peptidase C19 family.

It is found in the cytoplasm. The protein localises to the nucleus. The enzyme catalyses Thiol-dependent hydrolysis of ester, thioester, amide, peptide and isopeptide bonds formed by the C-terminal Gly of ubiquitin (a 76-residue protein attached to proteins as an intracellular targeting signal).. In terms of biological role, recognizes and hydrolyzes the peptide bond at the C-terminal Gly of ubiquitin. Involved in the processing of poly-ubiquitin precursors as well as that of ubiquitinated proteins. The sequence is that of Ubiquitin carboxyl-terminal hydrolase 48 (usp48) from Danio rerio (Zebrafish).